Consider the following 57-residue polypeptide: Large ribosomal subunit protein uL30 (57 aa).

The protein belongs to the universal ribosomal protein uL30 family. As to quaternary structure, part of the 50S ribosomal subunit.

The protein is Large ribosomal subunit protein uL30 of Buchnera aphidicola subsp. Cinara cedri (strain Cc).